A 554-amino-acid chain; its full sequence is Hyaluronan synthase 3 (554 aa).

The Cytoplasmic segment spans residues 1-15 (MPVQLTTALRVVGTS). A helical membrane pass occupies residues 16-36 (LFALVVLGGILAAYVTGYQFI). Residues 37–44 (HTEKHYLS) lie on the Extracellular side of the membrane. Residues 45–65 (FGLYGAILGLHLLIQSLFAFL) form a helical membrane-spanning segment. Residues 66-378 (EHRRMRRAGR…NSLWFHKHHL (313 aa)) lie on the Cytoplasmic side of the membrane. Residues 379-399 (WMTYESVVTGFFPFFLIATVI) traverse the membrane as a helical segment. Topologically, residues 400–409 (QLFYRGRIWN) are extracellular. The helical transmembrane segment at 410–430 (ILLFLLTVQLVGIIKATYACF) threads the bilayer. The Cytoplasmic segment spans residues 431–441 (LRGNAEMIFMS). A helical transmembrane segment spans residues 442-462 (LYSLLYMSSLLPAKIFAIATI). Asn463 carries N-linked (GlcNAc...) asparagine glycosylation. The Extracellular segment spans residues 463–474 (NKSGWGTSGRKT). Residues 475–495 (IVVNFIGLIPVSIWVAVLLGG) traverse the membrane as a helical segment. The Cytoplasmic portion of the chain corresponds to 496–516 (LAYTAYCQDLFSETELAFLVS). The chain crosses the membrane as a helical span at residues 517 to 537 (GAILYGCYWVALLMLYLAIIA). Over 538–554 (RRCGKKPEQYSLAFAEV) the chain is Extracellular.

Belongs to the NodC/HAS family. Requires Mg(2+) as cofactor. In terms of processing, O-GlcNAcylation increases the hyaluronan synthase activity, HAS3 stability and its plasma membrane residence. The concentration of UDP-GlcNAc controls the level of O-GlcNAc modification.

The protein localises to the cell membrane. The protein resides in the golgi apparatus membrane. It localises to the golgi apparatus. It is found in the trans-Golgi network membrane. Its subcellular location is the cytoplasmic vesicle. The catalysed reaction is [hyaluronan](n) + UDP-N-acetyl-alpha-D-glucosamine = N-acetyl-beta-D-glucosaminyl-(1-&gt;4)-[hyaluronan](n) + UDP + H(+). It catalyses the reaction N-acetyl-beta-D-glucosaminyl-(1-&gt;4)-[hyaluronan](n) + UDP-alpha-D-glucuronate = [hyaluronan](n+1) + UDP + H(+). It functions in the pathway glycan biosynthesis; hyaluronan biosynthesis. In terms of biological role, catalyzes the addition of GlcNAc or GlcUA monosaccharides to the nascent hyaluronan polymer. Therefore, it is essential to hyaluronan synthesis a major component of most extracellular matrices that has a structural role in tissues architectures and regulates cell adhesion, migration and differentiation. This is one of three isoenzymes responsible for cellular hyaluronan synthesis. This is Hyaluronan synthase 3 (Has3) from Mus musculus (Mouse).